We begin with the raw amino-acid sequence, 145 residues long: MRVVIQRVNHAAVRIDGETVGQIPKGLLLLVGLAEGDGEEQVVKAADKIAKMRIFEDEAGKTNLGIKDVGGQILSVSQFTLLADTKRGNRPSFVHAMRPPKSSQLWEEFNQELVKRGLTVETGEFGADMKVELENDGPFTIVLDL.

The Gly-cisPro motif, important for rejection of L-amino acids motif lies at 137–138 (GP).

Belongs to the DTD family. In terms of assembly, homodimer.

It localises to the cytoplasm. It catalyses the reaction glycyl-tRNA(Ala) + H2O = tRNA(Ala) + glycine + H(+). It carries out the reaction a D-aminoacyl-tRNA + H2O = a tRNA + a D-alpha-amino acid + H(+). In terms of biological role, an aminoacyl-tRNA editing enzyme that deacylates mischarged D-aminoacyl-tRNAs. Also deacylates mischarged glycyl-tRNA(Ala), protecting cells against glycine mischarging by AlaRS. Acts via tRNA-based rather than protein-based catalysis; rejects L-amino acids rather than detecting D-amino acids in the active site. By recycling D-aminoacyl-tRNA to D-amino acids and free tRNA molecules, this enzyme counteracts the toxicity associated with the formation of D-aminoacyl-tRNA entities in vivo and helps enforce protein L-homochirality. In Lactobacillus delbrueckii subsp. bulgaricus (strain ATCC BAA-365 / Lb-18), this protein is D-aminoacyl-tRNA deacylase.